A 282-amino-acid polypeptide reads, in one-letter code: E3 ubiquitin-protein ligase Siah1 (282 aa).

The disordered stretch occupies residues 1–28 (MSRQTATALPTGTSKCPPSQRVPTLSGT). The segment at 41–76 (CPVCFDYVLPPILQCQSGHLVCSNCRPKLTCCPTCR) adopts an RING-type zinc-finger fold. The tract at residues 90 to 282 (VANSVLFPCK…LGINVTISMC (193 aa)) is SBD. The segment at 93–153 (SVLFPCKYAS…VMPHLLHQHK (61 aa)) adopts an SIAH-type zinc-finger fold. Residues cysteine 98, cysteine 105, histidine 117, cysteine 121, cysteine 128, cysteine 135, histidine 147, and histidine 152 each coordinate Zn(2+).

The protein belongs to the SINA (Seven in absentia) family. Homodimer.

The catalysed reaction is S-ubiquitinyl-[E2 ubiquitin-conjugating enzyme]-L-cysteine + [acceptor protein]-L-lysine = [E2 ubiquitin-conjugating enzyme]-L-cysteine + N(6)-ubiquitinyl-[acceptor protein]-L-lysine.. Its pathway is protein modification; protein ubiquitination. E3 ubiquitin-protein ligase that mediates ubiquitination and subsequent proteasomal degradation of target proteins. E3 ubiquitin ligases accept ubiquitin from an E2 ubiquitin-conjugating enzyme in the form of a thioester and then directly transfers the ubiquitin to targeted substrates. It probably triggers the ubiquitin-mediated degradation of different substrates. This is E3 ubiquitin-protein ligase Siah1 (siah1) from Danio rerio (Zebrafish).